Reading from the N-terminus, the 305-residue chain is Nitrogen assimilation regulatory protein nac (305 aa).

Positions 1-58 (MNFRRLKYFVKIVDIGSLTQAAEVLHIAQPALSQQVATLEGELNQQLLIRTKRGVTPT) constitute an HTH lysR-type domain. A DNA-binding region (H-T-H motif) is located at residues 18–37 (LTQAAEVLHIAQPALSQQVA).

It belongs to the LysR transcriptional regulatory family.

Functionally, transcriptional activator for the hut, put and ure operons and repressor for the gdh and gltB operons in response to nitrogen limitation. Negative regulator of its own expression. This Escherichia coli (strain K12) protein is Nitrogen assimilation regulatory protein nac (nac).